Consider the following 355-residue polypeptide: Trans-3-hydroxy-L-proline dehydratase (355 aa).

Residue C111 is the Proton acceptor of the active site. Residues 112–113 (GH) and 276–277 (GS) each bind substrate.

The protein belongs to the proline racemase family. Homodimer.

It carries out the reaction trans-3-hydroxy-L-proline = 1-pyrroline-2-carboxylate + H2O. Functionally, catalyzes the dehydration of trans-3-hydroxy-L-proline (t3LHyp) to Delta(1)-pyrroline-2-carboxylate (Pyr2C). Together with LhpI, is involved in a metabolic pathway that converts t3LHyp to L-proline. This is Trans-3-hydroxy-L-proline dehydratase from Colwellia psychrerythraea (strain 34H / ATCC BAA-681) (Vibrio psychroerythus).